The sequence spans 302 residues: Phosphoribosylaminoimidazole-succinocarboxamide synthase (302 aa).

Belongs to the SAICAR synthetase family.

It catalyses the reaction 5-amino-1-(5-phospho-D-ribosyl)imidazole-4-carboxylate + L-aspartate + ATP = (2S)-2-[5-amino-1-(5-phospho-beta-D-ribosyl)imidazole-4-carboxamido]succinate + ADP + phosphate + 2 H(+). The protein operates within purine metabolism; IMP biosynthesis via de novo pathway; 5-amino-1-(5-phospho-D-ribosyl)imidazole-4-carboxamide from 5-amino-1-(5-phospho-D-ribosyl)imidazole-4-carboxylate: step 1/2. The sequence is that of Phosphoribosylaminoimidazole-succinocarboxamide synthase from Cupriavidus necator (strain ATCC 17699 / DSM 428 / KCTC 22496 / NCIMB 10442 / H16 / Stanier 337) (Ralstonia eutropha).